A 224-amino-acid chain; its full sequence is Fibronectin type III domain-containing protein 9 (224 aa).

The Fibronectin type-III domain occupies 1 to 101; that stretch reads MNIEVGNISY…FHTLDKSPLA (101 aa). A helical membrane pass occupies residues 113–133; the sequence is LWVLMAILLACFTAVLAFICL. Residues 175-224 form a disordered region; that stretch reads LQGLPLVEMPRKNSRDGAELDPEANQDAPDAGALQRGGGDPPAILPHCGE. Residues 183 to 192 show a composition bias toward basic and acidic residues; that stretch reads MPRKNSRDGA.

The protein localises to the membrane. The sequence is that of Fibronectin type III domain-containing protein 9 (FNDC9) from Homo sapiens (Human).